The chain runs to 580 residues: MTSTGIRLHAPAPGWAIAADVVVVGSGVAGLTAALRCESAGLRTVVVTKARLDDGSTRWAQGGVAAALGEGDTPEQHLDDTLVAGAGLCDQDAVRILVTEGPDAVRRLIATGAHFDESTEGGLALTREGGHHRRRIAHAGGDATGAEISRALVEAVRARGLRTVENALVLDLLTDAEGRTAGVTLHVMGEGQHDGVGAVHAPAVVLATGGMGQVFSATTNPSVSTGDGVALALRAGAEVSDLEFVQFHPTVLFLGSDAEGQQPLVSEAVRGEGAHLVDADGVRFMQGRHELAELAPRDIVAKAITRRMQEHGADHMYLDARHFGRTMWEHRFPTILAACRAHGIDPVTEPVPVAPAAHYASGGVRTDAHGRTTVPGLYACGEVACTGVHGANRLASNSLLEGLVYAERIAADIAAAHTAGTLHARVPAPLPHPDHSQHPRHPLLPPEARLTIQRIMTEGAGVLRSADSLARAADRLHGLHAEAREALHEHGKTSEPGVDTWEATNLLCVARVLVAAAARREETRGCHWREDHADRDDTTWRRHVVVRLNPDRTLAVHTTDTPEFPPTVHGAQPTHRPQEQ.

Residues 26–29 (SGVA), Lys49, 56–63 (STRWAQGG), and Asp227 contribute to the FAD site. Residue Arg297 is the Proton donor/acceptor of the active site. Residues Glu382 and 398 to 399 (SL) each bind FAD. The tract at residues 556–580 (VHTTDTPEFPPTVHGAQPTHRPQEQ) is disordered.

It belongs to the FAD-dependent oxidoreductase 2 family. NadB subfamily. FAD is required as a cofactor.

It localises to the cytoplasm. It carries out the reaction L-aspartate + O2 = iminosuccinate + H2O2. It functions in the pathway cofactor biosynthesis; NAD(+) biosynthesis; iminoaspartate from L-aspartate (oxidase route): step 1/1. Its function is as follows. Catalyzes the oxidation of L-aspartate to iminoaspartate, the first step in the de novo biosynthesis of NAD(+). In Streptomyces coelicolor (strain ATCC BAA-471 / A3(2) / M145), this protein is L-aspartate oxidase (nadB).